The primary structure comprises 247 residues: Protein lin-28 homolog B (247 aa).

A disordered region spans residues 1–22 (MAEGGASKGEEPEKLPGLAEDE). The CSD domain maps to 27–100 (HGTGHCKWFN…GLESIRVTGP (74 aa)). Phosphoserine is present on residues S94, S103, and S108. Residues 96 to 124 (RVTGPGGSPCLGSERRPKGKTLQKRKPKG) form a disordered region. Residues 112 to 123 (PKGKTLQKRKPK) are compositionally biased toward basic residues. CCHC-type zinc fingers lie at residues 125–142 (DRCYNCGGLDHHAKECSL) and 147–164 (KKCHYCQSIMHMVANCPH). Zn(2+) contacts are provided by C127, C130, H135, C140, C149, C152, H157, and C162. Residues 173–186 (SSQGRQEAESQPCS) are compositionally biased toward polar residues. A disordered region spans residues 173-247 (SSQGRQEAES…GPLIQKRKKT (75 aa)). Over residues 207-219 (VKSEMAEHSDRSP) the composition is skewed to basic and acidic residues.

This sequence belongs to the lin-28 family.

The protein resides in the nucleus. The protein localises to the nucleolus. Functionally, suppressor of microRNA (miRNA) biogenesis, including that of let-7 and possibly of miR107, miR-143 and miR-200c. Binds primary let-7 transcripts (pri-let-7), including pri-let-7g and pri-let-7a-1, and sequester them in the nucleolus, away from the microprocessor complex, hence preventing their processing into mature miRNA. Does not act on pri-miR21. The repression of let-7 expression is required for normal development and contributes to maintain the pluripotent state of embryonic stem cells by preventing let-7-mediated differentiation. When overexpressed, recruits ZCCHC11/TUT4 uridylyltransferase to pre-let-7 transcripts, leading to their terminal uridylation and degradation. This activity might not be relevant in vivo, as LIN28B-mediated inhibition of let-7 miRNA maturation appears to be ZCCHC11-independent. Interaction with target pre-miRNAs occurs via an 5'-GGAG-3' motif in the pre-miRNA terminal loop. Mediates MYC-induced let-7 repression. When overexpressed, may stimulate growth of carcinoma cell lines. This chain is Protein lin-28 homolog B (Lin28b), found in Mus musculus (Mouse).